Reading from the N-terminus, the 504-residue chain is L-arabinose isomerase (504 aa).

Residues Glu308, Glu335, His352, and His452 each coordinate Mn(2+).

The protein belongs to the arabinose isomerase family. Mn(2+) serves as cofactor.

The catalysed reaction is beta-L-arabinopyranose = L-ribulose. It functions in the pathway carbohydrate degradation; L-arabinose degradation via L-ribulose; D-xylulose 5-phosphate from L-arabinose (bacterial route): step 1/3. Catalyzes the conversion of L-arabinose to L-ribulose. In Bifidobacterium adolescentis (strain ATCC 15703 / DSM 20083 / NCTC 11814 / E194a), this protein is L-arabinose isomerase.